The chain runs to 123 residues: Small ribosomal subunit protein uS12c (123 aa).

The protein belongs to the universal ribosomal protein uS12 family. In terms of assembly, part of the 30S ribosomal subunit.

The protein resides in the plastid. Its subcellular location is the chloroplast. In terms of biological role, with S4 and S5 plays an important role in translational accuracy. Located at the interface of the 30S and 50S subunits. This Marchantia polymorpha (Common liverwort) protein is Small ribosomal subunit protein uS12c (rps12).